Consider the following 119-residue polypeptide: Large ribosomal subunit protein bL20 (119 aa).

Belongs to the bacterial ribosomal protein bL20 family.

Its function is as follows. Binds directly to 23S ribosomal RNA and is necessary for the in vitro assembly process of the 50S ribosomal subunit. It is not involved in the protein synthesizing functions of that subunit. The polypeptide is Large ribosomal subunit protein bL20 (Bacillus licheniformis (strain ATCC 14580 / DSM 13 / JCM 2505 / CCUG 7422 / NBRC 12200 / NCIMB 9375 / NCTC 10341 / NRRL NRS-1264 / Gibson 46)).